Here is an 85-residue protein sequence, read N- to C-terminus: uncharacterized protein (85 aa).

2 helical membrane passes run 13–35 (KWLA…FQPL) and 59–81 (EGIV…HLLL).

The protein localises to the cell membrane. This is an uncharacterized protein from Archaeoglobus fulgidus (strain ATCC 49558 / DSM 4304 / JCM 9628 / NBRC 100126 / VC-16).